Consider the following 92-residue polypeptide: MARSLKKGPFADDHLLKKVDDLNKTGSKTVIKTWSRRSTIFPQMVSHTIAVHDGRRHVPVYVTEDMVGHKLGEFVATRTFRGHGKDEKKSRK.

Belongs to the universal ribosomal protein uS19 family.

In terms of biological role, protein S19 forms a complex with S13 that binds strongly to the 16S ribosomal RNA. The polypeptide is Small ribosomal subunit protein uS19 (Lachnoclostridium phytofermentans (strain ATCC 700394 / DSM 18823 / ISDg) (Clostridium phytofermentans)).